Here is an 87-residue protein sequence, read N- to C-terminus: Small ribosomal subunit protein uS17 (87 aa).

It belongs to the universal ribosomal protein uS17 family. As to quaternary structure, part of the 30S ribosomal subunit.

Its function is as follows. One of the primary rRNA binding proteins, it binds specifically to the 5'-end of 16S ribosomal RNA. The sequence is that of Small ribosomal subunit protein uS17 from Staphylococcus carnosus (strain TM300).